Consider the following 306-residue polypeptide: UDP-3-O-acyl-N-acetylglucosamine deacetylase (306 aa).

Zn(2+)-binding residues include His-79, His-238, and Asp-242. Residue His-265 is the Proton donor of the active site.

Belongs to the LpxC family. The cofactor is Zn(2+).

The enzyme catalyses a UDP-3-O-[(3R)-3-hydroxyacyl]-N-acetyl-alpha-D-glucosamine + H2O = a UDP-3-O-[(3R)-3-hydroxyacyl]-alpha-D-glucosamine + acetate. The protein operates within glycolipid biosynthesis; lipid IV(A) biosynthesis; lipid IV(A) from (3R)-3-hydroxytetradecanoyl-[acyl-carrier-protein] and UDP-N-acetyl-alpha-D-glucosamine: step 2/6. Catalyzes the hydrolysis of UDP-3-O-myristoyl-N-acetylglucosamine to form UDP-3-O-myristoylglucosamine and acetate, the committed step in lipid A biosynthesis. The polypeptide is UDP-3-O-acyl-N-acetylglucosamine deacetylase (Shewanella halifaxensis (strain HAW-EB4)).